The chain runs to 220 residues: UPF0319 protein YccT (220 aa).

The first 20 residues, 1–20, serve as a signal peptide directing secretion; sequence MKTGALTTFLALCLPVTVFA.

Belongs to the UPF0319 family.

The chain is UPF0319 protein YccT from Salmonella choleraesuis (strain SC-B67).